Here is a 417-residue protein sequence, read N- to C-terminus: Sterile alpha motif domain-containing protein 14 (417 aa).

Disordered regions lie at residues 37–299 (LLAK…WQEA) and 388–417 (AAAE…AKKS). Over residues 40–49 (KGRRHRPSRS) the composition is skewed to basic residues. Residues Ser-84 and Ser-108 each carry the phosphoserine modification. A compositionally biased stretch (low complexity) spans 135–153 (AAASCSPPRSAPSSDSSPS). Basic and acidic residues predominate over residues 160-173 (RAEPHSEDDSRDAS). A phosphoserine mark is found at Ser-173 and Ser-179. 2 stretches are compositionally biased toward low complexity: residues 244 to 260 (SGKG…PTCS) and 276 to 295 (STLS…PSGP). Ser-279 is subject to Phosphoserine. Position 283 is a phosphothreonine (Thr-283). The SAM domain occupies 326 to 389 (WTSQQVGQWL…KRKLKEMAAA (64 aa)). Residues 377 to 417 (ALVKRKLKEMAAAAEKERKAQEKAARQREKLRRREQEAKKS) adopt a coiled-coil conformation. The segment covering 390–417 (AEKERKAQEKAARQREKLRRREQEAKKS) has biased composition (basic and acidic residues).

This is Sterile alpha motif domain-containing protein 14 (SAMD14) from Homo sapiens (Human).